A 242-amino-acid chain; its full sequence is Small ribosomal subunit protein uS2 (242 aa).

This sequence belongs to the universal ribosomal protein uS2 family.

This Pseudoalteromonas translucida (strain TAC 125) protein is Small ribosomal subunit protein uS2.